Here is a 252-residue protein sequence, read N- to C-terminus: Putative phosphonates utilization ATP-binding protein PhnK (252 aa).

An ABC transporter domain is found at 6 to 246; it reads LSVNNLTHLY…PHHPYTQLLV (241 aa). Residue 38-45 coordinates ATP; it reads GESGSGKT.

Belongs to the ABC transporter superfamily. Forms a complex with PhnG, PhnH, PhnI and PhnJ with the suggested composition PhnG(4)H(2)I(2)J(2)K.

In terms of biological role, belongs to an operon involved in alkylphosphonate uptake and C-P lyase. Exact function not known. PhnK is not required for the ribophosphonate triphosphate (RPnTP) synthase reaction. The protein is Putative phosphonates utilization ATP-binding protein PhnK (phnK) of Escherichia coli (strain K12).